A 234-amino-acid polypeptide reads, in one-letter code: Venom allergen 3 (234 aa).

The signal sequence occupies residues 1–22 (MELIVSILWLAITAENLANTLA). Intrachain disulfides connect C26-C41, C31-C125, C52-C118, and C198-C216. The SCP domain occupies 69–218 (VNKHNELRQR…WTKHYLVCNY (150 aa)). Residues 80-99 (ASGKEMRGTNGPQPPAVKMP) form a disordered region.

It belongs to the CRISP family. As to expression, expressed by the venom gland.

The protein resides in the secreted. The sequence is that of Venom allergen 3 from Solenopsis invicta (Red imported fire ant).